The following is a 274-amino-acid chain: Triosephosphate isomerase (274 aa).

31-33 (NWK) serves as a coordination point for substrate. H118 (electrophile) is an active-site residue. E188 (proton acceptor) is an active-site residue. Residues G194, S234, and 255-256 (GG) contribute to the substrate site.

Belongs to the triosephosphate isomerase family. In terms of assembly, homodimer.

It localises to the cytoplasm. It catalyses the reaction D-glyceraldehyde 3-phosphate = dihydroxyacetone phosphate. The protein operates within carbohydrate biosynthesis; gluconeogenesis. Its pathway is carbohydrate degradation; glycolysis; D-glyceraldehyde 3-phosphate from glycerone phosphate: step 1/1. In terms of biological role, involved in the gluconeogenesis. Catalyzes stereospecifically the conversion of dihydroxyacetone phosphate (DHAP) to D-glyceraldehyde-3-phosphate (G3P). The polypeptide is Triosephosphate isomerase (Chlamydia trachomatis serovar L2 (strain ATCC VR-902B / DSM 19102 / 434/Bu)).